A 234-amino-acid chain; its full sequence is Ponticulin-like protein J (234 aa).

The signal sequence occupies residues 1 to 20 (MRLLNNLILMVVLFVAVSNA). N-linked (GlcNAc...) asparagine glycans are attached at residues Asn19, Asn143, Asn166, and Asn206. Residues 115-213 (TIKCGTLPPD…SDNETAEGNN (99 aa)) form a disordered region. Residues 154 to 195 (KSTPKSPSTPKTNNSNEDSDLTTSSSDSSSSTKSSPKSKSST) show a composition bias toward low complexity. Asn212 is lipidated: GPI-like-anchor amidated asparagine. An N-linked (GlcNAc...) asparagine glycan is attached at Asn213. Residues 213–234 (NASSNIATFSLVIISLLVASLF) constitute a propeptide, removed in mature form.

It belongs to the ponticulin family. In terms of processing, the GPI-like-anchor contains a phosphoceramide group, rather than a phosphatidyl group.

Its subcellular location is the cell membrane. Binds F-actin and nucleates actin assembly. In Dictyostelium discoideum (Social amoeba), this protein is Ponticulin-like protein J (ponJ).